A 492-amino-acid chain; its full sequence is Glutamyl-tRNA(Gln) amidotransferase subunit A (492 aa).

Residues K78 and S158 each act as charge relay system in the active site. The active-site Acyl-ester intermediate is S182.

This sequence belongs to the amidase family. GatA subfamily. Heterotrimer of A, B and C subunits.

It carries out the reaction L-glutamyl-tRNA(Gln) + L-glutamine + ATP + H2O = L-glutaminyl-tRNA(Gln) + L-glutamate + ADP + phosphate + H(+). Allows the formation of correctly charged Gln-tRNA(Gln) through the transamidation of misacylated Glu-tRNA(Gln) in organisms which lack glutaminyl-tRNA synthetase. The reaction takes place in the presence of glutamine and ATP through an activated gamma-phospho-Glu-tRNA(Gln). The protein is Glutamyl-tRNA(Gln) amidotransferase subunit A of Rhodopseudomonas palustris (strain HaA2).